We begin with the raw amino-acid sequence, 68 residues long: Basic phospholipase A2 homolog BdipTx-I (68 aa).

An intrachain disulfide couples Cys-28 to Cys-44.

Belongs to the phospholipase A2 family. Group II subfamily. K49 sub-subfamily. Expressed by the venom gland.

It is found in the secreted. In terms of biological role, snake venom phospholipase A2 (PLA2) that lacks enzymatic activity. Is myotoxic, induces edema, and causes systemic effects (renal changes that lead to proteinuria) on mice. A model of myotoxic mechanism has been proposed: an apo Lys49-PLA2 is activated by the entrance of a hydrophobic molecule (e.g. fatty acid) at the hydrophobic channel of the protein leading to a reorientation of a monomer. This reorientation causes a transition between 'inactive' to 'active' states, causing alignment of C-terminal and membrane-docking sites (MDoS) side-by-side and putting the membrane-disruption sites (MDiS) in the same plane, exposed to solvent and in a symmetric position for both monomers. The MDoS region stabilizes the toxin on membrane by the interaction of charged residues with phospholipid head groups. Subsequently, the MDiS region destabilizes the membrane with penetration of hydrophobic residues. This insertion causes a disorganization of the membrane, allowing an uncontrolled influx of ions (i.e. calcium and sodium), and eventually triggering irreversible intracellular alterations and cell death. This Bothrops diporus (Chaco lancehead) protein is Basic phospholipase A2 homolog BdipTx-I.